The primary structure comprises 232 residues: Protein Mis18-alpha (232 aa).

3 positions are modified to phosphoserine: S36, S39, and S40. Residues 79–177 (PLVFLCSGCR…SVEAIESYIL (99 aa)) form the Mis18 domain. C84, C87, C140, and C143 together coordinate Zn(2+). K161 is covalently cross-linked (Glycyl lysine isopeptide (Lys-Gly) (interchain with G-Cter in SUMO2)). S232 bears the Phosphoserine mark.

Belongs to the mis18 family. Homodimer, and heterodimer with OIP5/MIS18B. Identified in a complex containing MIS18A, OIP5/MIS18B, MIS18BP1, RBBP7 and RBBP4.

It localises to the nucleus. It is found in the chromosome. Its subcellular location is the centromere. Required for recruitment of CENPA to centromeres and normal chromosome segregation during mitosis. The chain is Protein Mis18-alpha (MIS18A) from Otolemur garnettii (Small-eared galago).